The sequence spans 310 residues: Tagatose-6-phosphate kinase (310 aa).

Belongs to the carbohydrate kinase PfkB family. LacC subfamily.

It carries out the reaction D-tagatofuranose 6-phosphate + ATP = D-tagatofuranose 1,6-bisphosphate + ADP + H(+). The protein operates within carbohydrate metabolism; D-tagatose 6-phosphate degradation; D-glyceraldehyde 3-phosphate and glycerone phosphate from D-tagatose 6-phosphate: step 1/2. This chain is Tagatose-6-phosphate kinase, found in Streptococcus uberis (strain ATCC BAA-854 / 0140J).